The sequence spans 962 residues: MNFLRGVMGGQSAGPQHTEAETIQKLCDRVASSTLLDDRRNAVRALKSLSKKYRLEVGIQAMEHLIHVLQTDRSDSEIIGYALDTLYNIISNEEEEEVEENSTRQSEDLGSQFTEIFIKQQENVTLLLSLLEEFDFHVRWPGVKLLTSLLKQLGPQVQQIILVSPMGVSRLMDLLADSREVIRNDGVLLLQALTRSNGAIQKIVAFENAFERLLDIISEEGNSDGGIVVEDCLILLQNLLKNNNSNQNFFKEGSYIQRMKPWFEVGDENSGWSAQKVTNLHLMLQLVRVLVSPTNPPGATSSCQKAMFQCGLLQQLCTILMATGVPADILTETINTVSEVIRGCQVNQDYFASVNAPSNPPRPAIVVLLMSMVNERQPFVLRCAVLYCFQCFLYKNQKGQGEIVSTLLPSTIDATGNSVSAGQLLCGGLFSTDSLSNWCAAVALAHALQENATQKEQLLRVQLATSIGNPPVSLLQQCTNILSQGSKIQTRVGLLMLLCTWLSNCPIAVTHFLHNSANVPFLTGQIAENLGEEEQLVQGLCALLLGISIYFNDNSLESYMKEKLKQLIEKRIGKENFIEKLGFISKHELYSRASQKPQPNFPSPEYMIFDHEFTKLVKELEGVITKAIYKSSEEDKKEEEVKKTLEQHDNIVTHYKNMIREQDLQLEELRQQVSTLKCQNEQLQTAVTQQVSQIQQHKDQYNLLKIQLGKDNQHQGSYSEGAQMNGIQPEEIGRLREEIEELKRNQELLQSQLTEKDSMIENMKSSQTSGTNEQSSAIVSARDSEQVAELKQELATLKSQLNSQSVEITKLQTEKQELLQKTEAFAKSVEVQGETETIIATKTTDVEGRLSALLQETKELKNEIKALSEERTAIKEQLDSSNSTIAILQTEKDKLELEITDSKKEQDDLLVLLADQDQKILSLKNKLKDLGHPVEEEDELESGDQEDEDDESEDPGKDLDHI.

The globular head stretch occupies residues 1 to 637; sequence MNFLRGVMGG…IYKSSEEDKK (637 aa). ARM repeat units follow at residues 20-60, 61-121, 123-163, 166-207, 208-253, 255-310, 311-354, 363-408, 420-459, 473-513, 518-571, and 573-630; these read AETI…VGIQ, AMEH…IKQQ, NVTL…IILV, MGVS…VAFE, NAFE…FKEG, YIQR…MFQC, GLLQ…FASV, PAIV…STLL, SAGQLLCGGLFSTDSLSNWCAAVALAHALQENATQKEQLL, SLLQ…THFL, NVPF…IEKR, and GKEN…AIYK. The residue at position 50 (S50) is a Phosphoserine. K202 is subject to N6-acetyllysine. A coiled-coil region spans residues 638 to 930; that stretch reads EEEVKKTLEQ…LSLKNKLKDL (293 aa). Positions 763-778 are enriched in polar residues; that stretch reads MKSSQTSGTNEQSSAI. 2 disordered regions span residues 763 to 783 and 926 to 962; these read MKSSQTSGTNEQSSAIVSARD and KLKDLGHPVEEEDELESGDQEDEDDESEDPGKDLDHI. Positions 935 to 953 are enriched in acidic residues; sequence EEEDELESGDQEDEDDESE. Phosphoserine is present on residues S942 and S952.

The protein belongs to the VDP/USO1/EDE1 family. In terms of assembly, homodimer. Dimerizes by parallel association of the tails, resulting in an elongated structure with two globular head domains side by side, and a long rod-like tail structure. Interacts with MIF. Post-translationally, phosphorylated in a cell cycle-specific manner; phosphorylated in interphase but not in mitotic cells. Dephosphorylated protein associates with the Golgi membrane; phosphorylation promotes dissociation.

The protein localises to the cytoplasm. It is found in the cytosol. The protein resides in the golgi apparatus membrane. In terms of biological role, general vesicular transport factor required for intercisternal transport in the Golgi stack; it is required for transcytotic fusion and/or subsequent binding of the vesicles to the target membrane. May well act as a vesicular anchor by interacting with the target membrane and holding the vesicular and target membranes in proximity. The sequence is that of General vesicular transport factor p115 (USO1) from Homo sapiens (Human).